The chain runs to 368 residues: Phospho-N-acetylmuramoyl-pentapeptide-transferase (368 aa).

The next 9 membrane-spanning stretches (helical) occupy residues 30 to 50 (AAAITSLLITLLAGPGFIRYL), 72 to 92 (LPTMGGLLIIFSIEVSVLLWS), 98 to 118 (HVWLIMLAVLWMGVVGFIDDY), 139 to 159 (VALGLVVGIYTSLDPAFSVLM), 170 to 190 (LTIDYGYFYIPVVIFIITALS), 208 to 228 (AIVVFALGGFAYLAGNAVYAT), 238 to 258 (GGEIAVVCMAIVMASVGFLWF), 264 to 286 (EIFMGDTGSLALGSAIAVIALLI), and 345 to 365 (KIVIRFWIITILFFLTSLMTL).

It belongs to the glycosyltransferase 4 family. MraY subfamily. Mg(2+) serves as cofactor.

Its subcellular location is the cell inner membrane. It catalyses the reaction UDP-N-acetyl-alpha-D-muramoyl-L-alanyl-gamma-D-glutamyl-meso-2,6-diaminopimeloyl-D-alanyl-D-alanine + di-trans,octa-cis-undecaprenyl phosphate = di-trans,octa-cis-undecaprenyl diphospho-N-acetyl-alpha-D-muramoyl-L-alanyl-D-glutamyl-meso-2,6-diaminopimeloyl-D-alanyl-D-alanine + UMP. Its pathway is cell wall biogenesis; peptidoglycan biosynthesis. Functionally, catalyzes the initial step of the lipid cycle reactions in the biosynthesis of the cell wall peptidoglycan: transfers peptidoglycan precursor phospho-MurNAc-pentapeptide from UDP-MurNAc-pentapeptide onto the lipid carrier undecaprenyl phosphate, yielding undecaprenyl-pyrophosphoryl-MurNAc-pentapeptide, known as lipid I. The polypeptide is Phospho-N-acetylmuramoyl-pentapeptide-transferase (Chlorobium luteolum (strain DSM 273 / BCRC 81028 / 2530) (Pelodictyon luteolum)).